Here is a 311-residue protein sequence, read N- to C-terminus: Aspartate carbamoyltransferase catalytic subunit (311 aa).

Positions 59 and 60 each coordinate carbamoyl phosphate. Lys-87 contacts L-aspartate. Carbamoyl phosphate is bound by residues Arg-109, His-139, and Gln-142. 2 residues coordinate L-aspartate: Arg-172 and Arg-224. Carbamoyl phosphate is bound by residues Ala-265 and Pro-266.

The protein belongs to the aspartate/ornithine carbamoyltransferase superfamily. ATCase family. In terms of assembly, heterododecamer (2C3:3R2) of six catalytic PyrB chains organized as two trimers (C3), and six regulatory PyrI chains organized as three dimers (R2).

The enzyme catalyses carbamoyl phosphate + L-aspartate = N-carbamoyl-L-aspartate + phosphate + H(+). It functions in the pathway pyrimidine metabolism; UMP biosynthesis via de novo pathway; (S)-dihydroorotate from bicarbonate: step 2/3. Functionally, catalyzes the condensation of carbamoyl phosphate and aspartate to form carbamoyl aspartate and inorganic phosphate, the committed step in the de novo pyrimidine nucleotide biosynthesis pathway. This Streptococcus equi subsp. equi (strain 4047) protein is Aspartate carbamoyltransferase catalytic subunit.